We begin with the raw amino-acid sequence, 190 residues long: Small ribosomal subunit protein uS4 (190 aa).

In terms of domain architecture, S4 RNA-binding spans 106 to 178; the sequence is RRLQTVVFKH…GRVKRVKRNA (73 aa). The interval 166–190 is disordered; it reads GRPGRVKRVKRNAAKKGSGGGDDDE. Positions 169 to 179 are enriched in basic residues; it reads GRVKRVKRNAA.

This sequence belongs to the universal ribosomal protein uS4 family.

This is Small ribosomal subunit protein uS4 from Trypanosoma brucei brucei.